A 405-amino-acid polypeptide reads, in one-letter code: Accessory Sec system protein translocase subunit SecY2 (405 aa).

The next 10 membrane-spanning stretches (helical) occupy residues 14–34 (MCTL…LPFV), 65–85 (LFSI…MFSF), 104–124 (MYLT…NLPV), 131–151 (FLVF…LVWL), 156–176 (ATIG…ASLP), 190–210 (LGLL…VVLF), 243–263 (GMPY…LLLL), 285–305 (PLWI…FAFV), 343–363 (FALI…LFVL), and 368–388 (LLKV…LFTI).

It belongs to the SecY/SEC61-alpha family. SecY2 subfamily. Component of the accessory SecA2/SecY2 protein translocase complex required to export cell wall proteins. May form heterotrimers with SecE and SecG subunits.

The protein localises to the cell membrane. Functionally, part of the accessory SecA2/SecY2 system specifically required for export of possible cell wall proteins. The central subunit of a protein translocation channel. This is Accessory Sec system protein translocase subunit SecY2 from Streptococcus oralis (strain Uo5).